Reading from the N-terminus, the 632-residue chain is Eukaryotic peptide chain release factor GTP-binding subunit ERF3B (632 aa).

Disordered stretches follow at residues 1-31 and 162-200; these read MDLG…GDGI and SEAK…SIPS. Basic and acidic residues predominate over residues 178 to 192; it reads ESVKEVMEEKEEVRK. Residues 205-429 enclose the tr-type G domain; that stretch reads KEHVNVVFIG…YLDSLPNFNR (225 aa). The interval 214-221 is G1; sequence GHVDAGKS. Position 217-222 (217-222) interacts with GTP; sequence DAGKST. Positions 270-274 are G2; it reads GKTVE. The tract at residues 291–294 is G3; sequence DAPG. GTP is bound by residues 353–356 and 395–397; these read NKMD and SGL. The interval 353 to 356 is G4; it reads NKMD. Residues 395-397 form a G5 region; that stretch reads SGL.

The protein belongs to the TRAFAC class translation factor GTPase superfamily. Classic translation factor GTPase family. ERF3 subfamily. Component of the eRF1-eRF3-GTP ternary complex, composed of ETF1/ERF1 and ERF3 (GSPT1/ERF3A or GSPT2/ERF3B) and GTP. Component of the transient SURF (SMG1-UPF1-eRF1-eRF3) complex. Interacts with UPF1 and PABPC1. In terms of tissue distribution, highly expressed in brain. Moderately expressed in spleen and lung. Weakly expressed in heart, liver and kidney. Expression during the cell-cycle progression is constant.

It is found in the cytoplasm. The catalysed reaction is GTP + H2O = GDP + phosphate + H(+). GTPase component of the eRF1-eRF3-GTP ternary complex, a ternary complex that mediates translation termination in response to the termination codons UAA, UAG and UGA. GSPT2/ERF3B mediates ETF1/ERF1 delivery to stop codons: The eRF1-eRF3-GTP complex binds to a stop codon in the ribosomal A-site. GTP hydrolysis by GSPT2/ERF3B induces a conformational change that leads to its dissociation, permitting ETF1/ERF1 to accommodate fully in the A-site. Component of the transient SURF complex which recruits UPF1 to stalled ribosomes in the context of nonsense-mediated decay (NMD) of mRNAs containing premature stop codons. This chain is Eukaryotic peptide chain release factor GTP-binding subunit ERF3B (Gspt2), found in Mus musculus (Mouse).